The following is an 879-amino-acid chain: Alanine--tRNA ligase (879 aa).

4 residues coordinate Zn(2+): H566, H570, C668, and H672.

The protein belongs to the class-II aminoacyl-tRNA synthetase family. It depends on Zn(2+) as a cofactor.

The protein resides in the cytoplasm. It catalyses the reaction tRNA(Ala) + L-alanine + ATP = L-alanyl-tRNA(Ala) + AMP + diphosphate. Its function is as follows. Catalyzes the attachment of alanine to tRNA(Ala) in a two-step reaction: alanine is first activated by ATP to form Ala-AMP and then transferred to the acceptor end of tRNA(Ala). Also edits incorrectly charged Ser-tRNA(Ala) and Gly-tRNA(Ala) via its editing domain. The sequence is that of Alanine--tRNA ligase from Clostridium perfringens (strain 13 / Type A).